Here is a 609-residue protein sequence, read N- to C-terminus: Dihydroxy-acid dehydratase (609 aa).

Asp-81 serves as a coordination point for Mg(2+). Position 122 (Cys-122) interacts with [2Fe-2S] cluster. Residues Asp-123 and Lys-124 each coordinate Mg(2+). N6-carboxylysine is present on Lys-124. Cys-195 contributes to the [2Fe-2S] cluster binding site. Glu-491 serves as a coordination point for Mg(2+). Ser-517 acts as the Proton acceptor in catalysis.

It belongs to the IlvD/Edd family. Homodimer. The cofactor is [2Fe-2S] cluster. Mg(2+) serves as cofactor.

It carries out the reaction (2R)-2,3-dihydroxy-3-methylbutanoate = 3-methyl-2-oxobutanoate + H2O. It catalyses the reaction (2R,3R)-2,3-dihydroxy-3-methylpentanoate = (S)-3-methyl-2-oxopentanoate + H2O. The protein operates within amino-acid biosynthesis; L-isoleucine biosynthesis; L-isoleucine from 2-oxobutanoate: step 3/4. It functions in the pathway amino-acid biosynthesis; L-valine biosynthesis; L-valine from pyruvate: step 3/4. Its function is as follows. Functions in the biosynthesis of branched-chain amino acids. Catalyzes the dehydration of (2R,3R)-2,3-dihydroxy-3-methylpentanoate (2,3-dihydroxy-3-methylvalerate) into 2-oxo-3-methylpentanoate (2-oxo-3-methylvalerate) and of (2R)-2,3-dihydroxy-3-methylbutanoate (2,3-dihydroxyisovalerate) into 2-oxo-3-methylbutanoate (2-oxoisovalerate), the penultimate precursor to L-isoleucine and L-valine, respectively. This Acinetobacter baumannii (strain ACICU) protein is Dihydroxy-acid dehydratase.